We begin with the raw amino-acid sequence, 993 residues long: MASADDYFSDFEDDELDKLYEKAINKSVKETITRRAVPVQKDLHDNVLPGQKTVYEEIQRDVSFGPTHHELDYDALSFYVYPTNYEVRDYQYTIVHKSLFQNTLCAIPTGMGKTFIASTVMLNYFRWTKKAKIIFTAPTRPLVAQQIKACLGITGIPSDQTAILLDKSRKNREEIWANKRVFFATPQVVENDLKRGVLDPKDIVCLVIDEAHRATGSYAYTNVVKFIDRFNSSYRLLALTATPASDLEGVQEVVNNLDISKIEIRTEESMDIVKYMKKRKKEKIEVPLLLEIEDIIEQLGIAVKPVLQQAIELGIYEECDPSQINAFKAMQQSQKIIANPTIPEGIKWRNFFILQLLNNVGQMLKRLKIYGIRTFFNYFQNKCTEFTTKYNLKKSTNKIAAEFYYHPILKNIKNQCENYLSDPKFVGHGKLQCVRDELMEFFQKRGSDSRVIIFTELRESALEIVKFIDSVANDQIRPHIFIGQARAKEGFDEVKYTRKHAPKGRKKVERLHRQEQEKFLEAERTKRAANDKLERSARRTGSSEEAQISGMNQKMQKEVIHNFKKGEYNVLVCTSIGEEGLDIGEVDLIICYDTTSSPIKNIQRMGRTGRKRDGKIVLLFSSNESYKFERAMEDYSTLQALISKQCIDYKKSDRIIPEDIIPECHETLITINDENEIINEMEDVDEVIRYATQCMMGKKVKPKKAITKKKRVQENKKPKKFFMPDNVETSIVSASTLINKFLVNESGGKQLVTSNENPSKKRKIFKALDNLENDSTEEASSSLETEDEEFSDDNNVFIAEGQNGCQKDLETAIIRTGESLTTLKPLHNFERPNMALFVNDCGLPTKIEKNVKDIRGNQHNLEKEKNCTVDKNNMVLSLDDWNFFRDRYIPEGVSFDVEPNFVQYTKGVKVPHCHKVSKIITLFNDESNDNKKRTIDMNYTKCLARGMLRDEKKFVKVNDKSQVDNNSVNHDSSQSFTLSNAELDDILGSDSDF.

The 168-residue stretch at 94 to 261 (IVHKSLFQNT…EVVNNLDISK (168 aa)) folds into the Helicase ATP-binding domain. An ATP-binding site is contributed by 107–114 (IPTGMGKT). The DEAH box motif lies at 209–212 (DEAH). A Helicase C-terminal domain is found at 507-655 (KVERLHRQEQ…CIDYKKSDRI (149 aa)). The interval 530–551 (NDKLERSARRTGSSEEAQISGM) is disordered. Positions 539-551 (RTGSSEEAQISGM) are enriched in polar residues.

The protein belongs to the DEAD box helicase family. DEAH subfamily. FANCM sub-subfamily. Interacts with the MHF histone-fold complex to form the FANCM-MHF complex.

It localises to the nucleus. It catalyses the reaction ATP + H2O = ADP + phosphate + H(+). In terms of biological role, ATP-dependent DNA helicase involved in DNA damage repair by homologous recombination and in genome maintenance. Capable of unwinding D-loops. Plays a role in limiting crossover recombinants during mitotic DNA double-strand break (DSB) repair. Component of a FANCM-MHF complex which promotes gene conversion at blocked replication forks, probably by reversal of the stalled fork. This is ATP-dependent DNA helicase MPH1 from Saccharomyces cerevisiae (strain YJM789) (Baker's yeast).